The chain runs to 279 residues: Prephenate dehydratase (279 aa).

Residues 2–178 (KIAYLGPRGS…NSTRFWLLGK (177 aa)) enclose the Prephenate dehydratase domain. The region spanning 194-270 (LALTLPDNLP…LGVKVRLLGN (77 aa)) is the ACT domain.

It carries out the reaction prephenate + H(+) = 3-phenylpyruvate + CO2 + H2O. It participates in amino-acid biosynthesis; L-phenylalanine biosynthesis; phenylpyruvate from prephenate: step 1/1. The sequence is that of Prephenate dehydratase (pheA) from Lactococcus lactis subsp. lactis (strain IL1403) (Streptococcus lactis).